Consider the following 213-residue polypeptide: Pyridoxine/pyridoxamine 5'-phosphate oxidase (213 aa).

FMN-binding positions include 60-65 (RMVLMK), 75-76 (YS), Lys82, and Gln104. Residue Lys65 coordinates substrate. Tyr122 and Arg126 together coordinate substrate. FMN-binding positions include 139–140 (QS) and Trp184. Position 190-192 (190-192 (RLH)) interacts with substrate. Arg194 is a binding site for FMN.

The protein belongs to the pyridoxamine 5'-phosphate oxidase family. In terms of assembly, homodimer. It depends on FMN as a cofactor.

It carries out the reaction pyridoxamine 5'-phosphate + O2 + H2O = pyridoxal 5'-phosphate + H2O2 + NH4(+). The catalysed reaction is pyridoxine 5'-phosphate + O2 = pyridoxal 5'-phosphate + H2O2. The protein operates within cofactor metabolism; pyridoxal 5'-phosphate salvage; pyridoxal 5'-phosphate from pyridoxamine 5'-phosphate: step 1/1. It functions in the pathway cofactor metabolism; pyridoxal 5'-phosphate salvage; pyridoxal 5'-phosphate from pyridoxine 5'-phosphate: step 1/1. Its function is as follows. Catalyzes the oxidation of either pyridoxine 5'-phosphate (PNP) or pyridoxamine 5'-phosphate (PMP) into pyridoxal 5'-phosphate (PLP). This is Pyridoxine/pyridoxamine 5'-phosphate oxidase from Rhodopseudomonas palustris (strain BisA53).